A 283-amino-acid chain; its full sequence is tRNA dimethylallyltransferase (283 aa).

The interaction with substrate tRNA stretch occupies residues 5–8 (DSML).

This sequence belongs to the IPP transferase family. As to quaternary structure, monomer. Mg(2+) serves as cofactor.

The catalysed reaction is adenosine(37) in tRNA + dimethylallyl diphosphate = N(6)-dimethylallyladenosine(37) in tRNA + diphosphate. Catalyzes the transfer of a dimethylallyl group onto the adenine at position 37 in tRNAs that read codons beginning with uridine, leading to the formation of N6-(dimethylallyl)adenosine (i(6)A). The protein is tRNA dimethylallyltransferase of Desulforamulus reducens (strain ATCC BAA-1160 / DSM 100696 / MI-1) (Desulfotomaculum reducens).